A 331-amino-acid polypeptide reads, in one-letter code: NADH-quinone oxidoreductase subunit H (331 aa).

The next 8 membrane-spanning stretches (helical) occupy residues 13–33 (FLIS…VLTL), 80–100 (WVFL…WLVI), 113–133 (IGLV…IMAG), 159–179 (LILS…VDIV), 183–203 (AGGF…AFFV), 249–269 (VMSA…LPFL), 273–293 (VFNW…FQWI), and 311–331 (KILV…MLVI).

Belongs to the complex I subunit 1 family. In terms of assembly, NDH-1 is composed of 14 different subunits. Subunits NuoA, H, J, K, L, M, N constitute the membrane sector of the complex.

It is found in the cell membrane. It catalyses the reaction a quinone + NADH + 5 H(+)(in) = a quinol + NAD(+) + 4 H(+)(out). NDH-1 shuttles electrons from NADH, via FMN and iron-sulfur (Fe-S) centers, to quinones in the respiratory chain. The immediate electron acceptor for the enzyme in this species is believed to be ubiquinone. Couples the redox reaction to proton translocation (for every two electrons transferred, four hydrogen ions are translocated across the cytoplasmic membrane), and thus conserves the redox energy in a proton gradient. This subunit may bind ubiquinone. The chain is NADH-quinone oxidoreductase subunit H from Rubrobacter xylanophilus (strain DSM 9941 / JCM 11954 / NBRC 16129 / PRD-1).